The sequence spans 497 residues: Ammonium transporter 1 (497 aa).

Residues 1 to 32 (MSSTTDATPTPSGVNGGDSMTVNLNQFYNNGD) lie on the Extracellular side of the membrane. The chain crosses the membrane as a helical span at residues 33 to 53 (VAWILTSTALVFIMIPGVGFF). Residues 54–63 (YSGLARRRSA) are Cytoplasmic-facing. The helical transmembrane segment at 64–84 (ISMLFLSMMSVAIVAFQWFFW) threads the bilayer. The Extracellular portion of the chain corresponds to 85 to 122 (GYSLTFSHEGGPYIGSLANFGLRQTLGRPSSGASSVPD). A helical transmembrane segment spans residues 123–143 (ILFCVFQGMFAAITPALAIGA). Over 144–150 (AADRGRM) the chain is Cytoplasmic. The helical transmembrane segment at 151-171 (FPCMVFMFLWTSIVYDPIAFW) threads the bilayer. At 172–187 (TWNPNGWLNKLGSYDF) the chain is on the extracellular side. Residues 188–208 (AGGSPVHISSGMAALAYSIVI) form a helical membrane-spanning segment. The Cytoplasmic portion of the chain corresponds to 209–223 (GKRCDHGTTKYRPHN). Residues 224-244 (VPHVVLGTVFLWFGWFGFNGG) form a helical membrane-spanning segment. The Extracellular segment spans residues 245–253 (SSAAANMRG). The chain crosses the membrane as a helical span at residues 254–274 (VMAVVVTHLAASVGGIVWCVI). Residues 275 to 281 (DFAKNRH) lie on the Cytoplasmic side of the membrane. Residues 282–302 (WSVVGFCEGAVAGLVAITPGS) traverse the membrane as a helical segment. Glycine 303 is a topological domain (extracellular). A helical membrane pass occupies residues 304-324 (FVPPWAAVVIGALGAVFCYAA). The Cytoplasmic segment spans residues 325 to 338 (TYLKKIIRVDDALD). The helical transmembrane segment at 339–359 (IFAEHGVGGMVGNILTALFAA) threads the bilayer. The Extracellular segment spans residues 360–394 (DYIEALDGSGTAYTGGWITHHYIQLGYQLADTVSC). The chain crosses the membrane as a helical span at residues 395–415 (AAYSFAVSCALLFVMNYIPGL). Residues 416-497 (SLRVSREDEV…AESEAQAPAI (82 aa)) are Cytoplasmic-facing. Residues 440–497 (YKDSTDEPPPITTSGVQYTSPTVSDSASNEKEQEHRAQNEAQKEEEYRAESEAQAPAI) are disordered. Residues 451-466 (TTSGVQYTSPTVSDSA) show a composition bias toward polar residues. Over residues 467 to 490 (SNEKEQEHRAQNEAQKEEEYRAES) the composition is skewed to basic and acidic residues.

It belongs to the ammonia transporter channel (TC 1.A.11.2) family.

Its subcellular location is the membrane. Transporter for ammonium to use as a nitrogen source. Under ammonium limitation acts as an ammonium sensor, generating a signal that leads to pseudohyphal growth. This chain is Ammonium transporter 1 (amt1), found in Schizosaccharomyces pombe (strain 972 / ATCC 24843) (Fission yeast).